The sequence spans 218 residues: Cytidylate kinase (218 aa).

ATP is bound at residue 7–15; that stretch reads GPSASGKSS.

The protein belongs to the cytidylate kinase family. Type 1 subfamily.

The protein resides in the cytoplasm. It carries out the reaction CMP + ATP = CDP + ADP. The catalysed reaction is dCMP + ATP = dCDP + ADP. The polypeptide is Cytidylate kinase (Borrelia duttonii (strain Ly)).